Consider the following 604-residue polypeptide: Dopamine receptor 3 (604 aa).

The Extracellular portion of the chain corresponds to 1–23; sequence MLTGQHHIPGIESPLMVVLWRVA. The chain crosses the membrane as a helical span at residues 24 to 44; it reads AGVFLPLVPTMAVFGNVLVIL. Residues 45–58 lie on the Cytoplasmic side of the membrane; that stretch reads SVYRERNLQTVTNM. A helical membrane pass occupies residues 59–79; the sequence is LIVSLAVSDLFVAIGVMSFGV. The Extracellular segment spans residues 80 to 96; the sequence is YYEWNGFKWGLGSFFCH. C95 and C170 are oxidised to a cystine. A helical membrane pass occupies residues 97–117; sequence VYQALDVACSTASILNLLAIS. Residues 118-141 lie on the Cytoplasmic side of the membrane; the sequence is LDRYIAIGHPISYAQYGARGGRAM. Residues 142-162 traverse the membrane as a helical segment; that stretch reads ISITIVWGVSCAVALPLLLGV. Over 163–179 the chain is Extracellular; that stretch reads NPMENDQCELANPWFNM. Residues 180–200 traverse the membrane as a helical segment; sequence ISSIFSFFIPCIAMIILYTII. Topologically, residues 201 to 520 are cytoplasmic; sequence FRRLRQRERA…TKQMRREHKA (320 aa). The tract at residues 399–430 is disordered; the sequence is SIQDEKKMNSRPPENPFAHQNGTNKQRLLPNP. The helical transmembrane segment at 521–541 threads the bilayer; it reads TVTLAVVLAVFLFCWLPFFIL. Topologically, residues 542–559 are extracellular; sequence HLSNSICLVIDSNSDCIG. A helical transmembrane segment spans residues 560-580; the sequence is FLPLYLATWLGYLNSSLNPLI. Over 581-604 the chain is Cytoplasmic; the sequence is YTVFDQRFRNAFRNILSCGFFKKR.

It belongs to the G-protein coupled receptor 1 family.

The protein localises to the cell membrane. Its function is as follows. Receptor for dopamine. The activity of this receptor is mediated by G proteins which activate adenylyl cyclase. In terms of antagonist responses, would be classed with the D2-like dopamine receptor group. Mediates the effect of dopamine on the inhibition of locomotion. Acts as an antagonist of dop-1. The chain is Dopamine receptor 3 from Caenorhabditis briggsae.